The primary structure comprises 612 residues: U-box domain-containing protein 11 (612 aa).

Residues 127 to 196 (DEVGEQVELA…LHFGEEEEKQ (70 aa)) are a coiled coil. In terms of domain architecture, U-box spans 240–314 (TIPVDFLCPV…SRWCAEHNIE (75 aa)). 5 ARM repeats span residues 363 to 402 (TDNR…NLSI), 404 to 443 (ENNK…SLSL), 445 to 484 (DENK…NLCI), 486 to 526 (HGNK…VLAN), and 528 to 567 (QDAK…SLCK).

It carries out the reaction S-ubiquitinyl-[E2 ubiquitin-conjugating enzyme]-L-cysteine + [acceptor protein]-L-lysine = [E2 ubiquitin-conjugating enzyme]-L-cysteine + N(6)-ubiquitinyl-[acceptor protein]-L-lysine.. It functions in the pathway protein modification; protein ubiquitination. In terms of biological role, functions as an E3 ubiquitin ligase. In Arabidopsis thaliana (Mouse-ear cress), this protein is U-box domain-containing protein 11 (PUB11).